Reading from the N-terminus, the 591-residue chain is ATPase family AAA domain-containing protein 3A (591 aa).

Residues 1–52 (MSWLFGIKGPKGEGTGPPLPLPPAQPGAEGGGDRGAGDRPSPKDKWSNFDPT) are disordered. The residue at position 2 (S2) is an N-acetylserine. Residues 2-49 (SWLFGIKGPKGEGTGPPLPLPPAQPGAEGGGDRGAGDRPSPKDKWSNF) form a required for interaction with the inner surface of the mitochondrial outer membrane region. Residues 2–245 (SWLFGIKGPK…FRAFVTDWDK (244 aa)) are Mitochondrial intermembrane-facing. The segment covering 31-47 (GGDRGAGDRPSPKDKWS) has biased composition (basic and acidic residues). Residues 55–216 (ERAAKAAREL…REQIRLKAAE (162 aa)) are a coiled coil. A helical membrane pass occupies residues 246–263 (VTATVAGLTLLAVGVYSA). Over 264 to 586 (KNATSVAGRY…DSQTNKPPHP (323 aa)) the chain is Mitochondrial matrix. The interval 289–304 (RISVLEALRHPIQVSR) is S100B-binding. Residue 351–358 (GPPGTGKT) coordinates ATP. K490 bears the N6-acetyllysine; alternate mark. An N6-succinyllysine; alternate modification is found at K490. An N6-acetyllysine mark is found at K494 and K512. A disordered region spans residues 572–591 (KVERPDSQTNKPPHPSLLSC).

Belongs to the AAA ATPase family. Can form homooligomers. Homodimer formation at the N-terminus may be regulated by ATP and is required for the interaction with the inner surface of the mitochondrial outer membrane and correct mitochondrial homeostasis. Interacts with components of the mitochondrial ribosome and with other proteins involved in mitochondrial RNA metabolism. May also interact with protein involved in lipid metabolism, including STARD9. May interact with FAM210A. Interacts with GADD45GIP1. Interacts with S100B in a Ca(+2)- and Zn(+2)-dependent manner; this interaction probably occurs in the cytosol prior to mitochondrial targeting. S100B could assist ATAD3A cytoplasmic processing, preventing aggregation and favoring mitochondrial localization. Interacts with HSP60/HSPD1. Interacts with CLPB. Interacts with EIF2AK3/PERK; ATAD3A and EIF2S1/eIF-2-alpha occupy a common binding site within the cytoplasmic loop of EIF2AK3/PERK, leading to prevent EIF2AK3/PERK association with its substrate EIF2S1/eIF-2-alpha. As to expression, expressed in heart, spleen, kidney, liver and at smaller levels, in lung and muscle (at protein level).

It localises to the mitochondrion inner membrane. It is found in the mitochondrion matrix. Its subcellular location is the mitochondrion nucleoid. It catalyses the reaction ATP + H2O = ADP + phosphate + H(+). In terms of biological role, essential for mitochondrial network organization, mitochondrial metabolism and cell growth at organism and cellular level. May play an important role in mitochondrial protein synthesis. May also participate in mitochondrial DNA replication. May bind to mitochondrial DNA D-loops and contribute to nucleoid stability. Required for enhanced channeling of cholesterol for hormone-dependent steroidogenesis. Involved in mitochondrial-mediated antiviral innate immunity. Required to protect mitochondria from the PERK-mediated unfolded protein response: specifically inhibits the activity of EIF2AK3/PERK at mitochondria-endoplasmic reticulum contact sites, thereby providing a safe haven for mitochondrial protein translation during endoplasmic reticulum stress. Ability to inhibit EIF2AK3/PERK is independent of its ATPase activity. Also involved in the mitochondrial DNA damage response by promoting signaling between damaged genomes and the mitochondrial membrane, leading to activation of the integrated stress response (ISR). In Mus musculus (Mouse), this protein is ATPase family AAA domain-containing protein 3A (Atad3a).